Here is a 263-residue protein sequence, read N- to C-terminus: Small ribosomal subunit protein uS2 (263 aa).

N-acetylserine is present on Ser-2. Residues 213 to 223 (NAAEEARAGAT) show a composition bias toward low complexity. The disordered stretch occupies residues 213-245 (NAAEEARAGATEETEEVVAEAETEWNTETNVED). Positions 224–245 (EETEEVVAEAETEWNTETNVED) are enriched in acidic residues.

It belongs to the universal ribosomal protein uS2 family. As to quaternary structure, component of the small ribosomal subunit. Mature ribosomes consist of a small (40S) and a large (60S) subunit. The 40S subunit contains about 33 different proteins and 1 molecule of RNA (18S). The 60S subunit contains about 49 different proteins and 3 molecules of RNA (25S, 5.8S and 5S). Interacts with RPS21.

It localises to the cytoplasm. Required for the assembly and/or stability of the 40S ribosomal subunit. Required for the processing of the 20S rRNA-precursor to mature 18S rRNA in a late step of the maturation of 40S ribosomal subunits. This Clavispora lusitaniae (strain ATCC 42720) (Yeast) protein is Small ribosomal subunit protein uS2.